A 230-amino-acid chain; its full sequence is Thioredoxin domain-containing protein PLP3A (230 aa).

A Thioredoxin domain is found at 89 to 173; sequence VSEGDFLGEV…GVAMDRLVGF (85 aa). The interval 197 to 230 is disordered; that stretch reads LSKKKKEEDDEDAEYQESIRRSVRSSENLDSDSD.

Belongs to the phosducin family. Interacts with TUBB2, TUBB3, TUBB4 and TUBB5. In terms of tissue distribution, expressed in embryos, shoot meristems, leaf primordia, root meristems, floral meristems and young floral buds.

The protein resides in the cytoplasm. It is found in the nucleus. In terms of biological role, tubulin-binding protein involved in microtubule formation. The chain is Thioredoxin domain-containing protein PLP3A (PLP3A) from Arabidopsis thaliana (Mouse-ear cress).